The primary structure comprises 316 residues: UDP-N-acetylenolpyruvoylglucosamine reductase (316 aa).

In terms of domain architecture, FAD-binding PCMH-type spans 30–194 (VGGEADYLVF…LSVKFALAPG (165 aa)). Arg-173 is a catalytic residue. Ser-223 serves as the catalytic Proton donor. Glu-293 is a catalytic residue.

The protein belongs to the MurB family. FAD serves as cofactor.

The protein resides in the cytoplasm. It catalyses the reaction UDP-N-acetyl-alpha-D-muramate + NADP(+) = UDP-N-acetyl-3-O-(1-carboxyvinyl)-alpha-D-glucosamine + NADPH + H(+). The protein operates within cell wall biogenesis; peptidoglycan biosynthesis. In terms of biological role, cell wall formation. This is UDP-N-acetylenolpyruvoylglucosamine reductase from Streptococcus pneumoniae serotype 2 (strain D39 / NCTC 7466).